Here is a 320-residue protein sequence, read N- to C-terminus: Cytochrome f (320 aa).

A signal peptide spans 1–35 (MQNRNTFSWVKEQMTRFISVSIMIYVITRTSISNA). Residues Tyr-36, Cys-56, Cys-59, and His-60 each contribute to the heme site. Residues 286–306 (VQGLLFFLASVILAQIFLVLK) traverse the membrane as a helical segment.

The protein belongs to the cytochrome f family. As to quaternary structure, the 4 large subunits of the cytochrome b6-f complex are cytochrome b6, subunit IV (17 kDa polypeptide, petD), cytochrome f and the Rieske protein, while the 4 small subunits are PetG, PetL, PetM and PetN. The complex functions as a dimer. The cofactor is heme.

It is found in the plastid. It localises to the chloroplast thylakoid membrane. Component of the cytochrome b6-f complex, which mediates electron transfer between photosystem II (PSII) and photosystem I (PSI), cyclic electron flow around PSI, and state transitions. The chain is Cytochrome f from Liriodendron tulipifera (Tuliptree).